A 309-amino-acid chain; its full sequence is ESX-3 secretion system protein EccE3 (309 aa).

2 helical membrane passes run 5–25 and 29–49; these read IALA…QTTT and VLGV…GMFL.

The protein belongs to the EccE family. As to quaternary structure, part of the ESX-3 / type VII secretion system (T7SS), which is composed of cytosolic and membrane components. The ESX-3 membrane complex is composed of EccB3, EccC3, EccD3 and EccE3.

It localises to the cell inner membrane. In terms of biological role, part of the ESX-3 specialized secretion system, which is required for siderophore-mediated iron acquisition and for the secretion of EsxH and EsxG. This is ESX-3 secretion system protein EccE3 from Mycolicibacterium smegmatis (strain ATCC 700084 / mc(2)155) (Mycobacterium smegmatis).